The following is a 669-amino-acid chain: Dymeclin (669 aa).

G2 carries the N-myristoyl glycine lipid modification.

The protein belongs to the dymeclin family. Post-translationally, myristoylated in vitro; myristoylation is not essential for protein targeting to Golgi compartment.

It localises to the cytoplasm. Its subcellular location is the golgi apparatus. Functionally, necessary for correct organization of Golgi apparatus. This Gallus gallus (Chicken) protein is Dymeclin (DYM).